The sequence spans 762 residues: MSKKPPNRPGITFEIGARLEALDYLQKWYPSRIEKIDYEEGKMLVHFERWSHRYDEWIYWDSNRLRPLERPALRKEGLKDDEEFVDFKPGEEVLARWTDCRYYPAKIEAINKEGTFTVQFYDGVIRCLKRMHIKSMPEDAKGQAREREQIAPELRLVTEVEPKEDWIALVKAAAAAAAKNKAGTKPRTSANSNKDKEERKWLKVPSKKEETSTSTIMQEVQKKEEEPTSSDTFVGFPIVDVPKMAFVQAESTLSHKRKSNLGNSFQAKRARLNKITGLLASKAVVADGAEKKEGNKETAPVLEQEISPKPQIQKKNEADISSSANIQKPALLSSTLSSGKARSKKCKQESGDSSGCIKPPKSPLCPELIQVEDLTLVSQLPSSVINKTSPSQPLNSPRSYKHSQRRRRSQRLATCSLPDDSVEKVSSPSSVTDGKVFSISAQNQQSKLEVPDVAHMSLEKRGPCLPLDLSRSSEVTAPLSTESTFRNEYPSKDKEDIQMITYLSSKAVTDGRVATTASAPSSHVHALHLELPLTNSLKLPKGSSKKKRSSTSVSSEGTEIQYSVPVKEKCFESLKEKILKNVIEKDKHSEVGAVRVERKGKVEEKSSTTYDFLSGKKKEKEKEKKEKKEKDHKSKQKKKKKKKKKSKQHDYSDYEDSSVEFLDRCSSPLTRSSGSSLTLRSMFSEKNTSYQYPRAILSVDLSGENLSDMEFLDDSSTESLLLSGDEYNQDFDSTILKSLRMKTMLSMKLLDAFVNWMKKMAL.

2 consecutive Tudor domains span residues Ile-11–Pro-71 and Val-85–Lys-141. Disordered stretches follow at residues Ala-178–Asp-231, Ala-289–Pro-359, Ser-383–Arg-411, Ser-536–Glu-559, and Leu-613–Tyr-651. The span at Asn-193 to Thr-211 shows a compositional bias: basic and acidic residues. Polar residues-rich tracts occupy residues Asp-319–Lys-340 and Ser-383–Arg-398. Residues Ser-399 to Gln-410 show a composition bias toward basic residues. Over residues Ser-614–His-632 the composition is skewed to basic and acidic residues. The segment covering Lys-633–Lys-647 has biased composition (basic residues).

It localises to the nucleus. In terms of biological role, is a negative regulator of proteasomal degradation of methylated proteins. Involved in the maintainance of pluripotency of embryonic stem cells. The chain is PHD finger protein 20-like protein 1 (PHF20L1) from Gallus gallus (Chicken).